The primary structure comprises 399 residues: MYQPVALFIGLRYMRGRAADRFGRFVSWLSTIGITLGVMALVTVLSVMNGFERELQNNILGLMPQAILSSEHGSLNPQQLPETAVKLDGVNRVAPITTGDVVLQSARSVAVGVMLGIDPAQKDPLTPYLVNVKQTDLEPGKYNVILGEQLASQLGVNRGDQIRVMVPSASQFTPMGRIPSQRLFNVIGTFAANSEVDGYEMLVNIEDASRLMRYPAGNITGWRLWLDEPLKVDSLSQQKLPEGSKWQDWRDRKGELFQAVRMEKNMMGLLLSLIVAVAAFNIITSLGLMVMEKQGEVAILQTQGLTPRQIMMVFMVQGASAGIIGAILGAALGALLASQLNNLMPIIGVLLDGAALPVAIEPLQVIVIALVAMAIALLSTLYPSWRAAATQPAEALRYE.

Helical transmembrane passes span 25–45 (FVSW…VTVL), 270–290 (LLSL…GLMV), 310–330 (IMMV…ILGA), and 358–378 (VAIE…IALL).

Belongs to the ABC-4 integral membrane protein family. LolC/E subfamily.

Its subcellular location is the cell inner membrane. Functionally, part of an ATP-dependent transport system LolCDE responsible for the release of lipoproteins targeted to the outer membrane from the inner membrane. Such a release is dependent of the sorting-signal (absence of an Asp at position 2 of the mature lipoprotein) and of LolA. The polypeptide is Lipoprotein-releasing system transmembrane protein LolC (lolC) (Escherichia coli O157:H7).